A 337-amino-acid polypeptide reads, in one-letter code: Phosphate acyltransferase (337 aa).

The protein belongs to the PlsX family. As to quaternary structure, homodimer. Probably interacts with PlsY.

Its subcellular location is the cytoplasm. The enzyme catalyses a fatty acyl-[ACP] + phosphate = an acyl phosphate + holo-[ACP]. It participates in lipid metabolism; phospholipid metabolism. Catalyzes the reversible formation of acyl-phosphate (acyl-PO(4)) from acyl-[acyl-carrier-protein] (acyl-ACP). This enzyme utilizes acyl-ACP as fatty acyl donor, but not acyl-CoA. This chain is Phosphate acyltransferase, found in Ehrlichia canis (strain Jake).